The primary structure comprises 256 residues: MRHPVVMGNWKLNGSKEMVVDLLNGLNAELEGVTGVDVAVAPPALFVDLAERTLTEAGSAIILGAQNTDLNNSGAFTGDMSPAMLKEFGATHIIIGHSERREYHAESDEFVAKKFAFLKENGLTPVLCIGESDAQNEAGETMAVCARQLDAVINTQGVEALEGAIIAYEPIWAIGTGKAATAEDAQRIHAQIRAHIAEKSEAVAKNVVIQYGGSVKPENAAAYFAQPDIDGALVGGAALDAKSFAAIAKAAAEAKA.

Substrate is bound at residue 9 to 11 (NWK). Histidine 97 acts as the Electrophile in catalysis. The Proton acceptor role is filled by glutamate 169. Substrate contacts are provided by residues glycine 175, serine 214, and 235 to 236 (GG).

The protein belongs to the triosephosphate isomerase family. In terms of assembly, homodimer.

The protein resides in the cytoplasm. It carries out the reaction D-glyceraldehyde 3-phosphate = dihydroxyacetone phosphate. It participates in carbohydrate biosynthesis; gluconeogenesis. The protein operates within carbohydrate degradation; glycolysis; D-glyceraldehyde 3-phosphate from glycerone phosphate: step 1/1. Functionally, involved in the gluconeogenesis. Catalyzes stereospecifically the conversion of dihydroxyacetone phosphate (DHAP) to D-glyceraldehyde-3-phosphate (G3P). This Moritella marina (Vibrio marinus) protein is Triosephosphate isomerase.